Reading from the N-terminus, the 241-residue chain is Beta-nerve growth factor (241 aa).

The N-terminal stretch at 1–18 (MSMLFYTLITALLIGVQA) is a signal peptide. The propeptide occupies 19–121 (EPYTDSNLPE…SFNRTHRSKR (103 aa)). Asparagine 69, asparagine 114, and asparagine 166 each carry an N-linked (GlcNAc...) asparagine glycan. Cystine bridges form between cysteine 136–cysteine 201, cysteine 179–cysteine 229, and cysteine 189–cysteine 231.

This sequence belongs to the NGF-beta family. Homodimer. The homodimer interacts with a single NTRK1 chain. The homodimer interacts with a single NGFR chain. The NGF dimer interacts with a single SORCS2 chain (via extracellular domain). The NGF precursor (proNGF) binds to a receptor complex formed by SORT1 and NGFR, which leads to NGF endocytosis. Both mature NGF and the immature NGF precursor (proNGF) interact with SORCS2 and with the heterodimer formed by SORCS2 and NGFR (via extracellular domains). The NGF precursor (proNGF) has much higher affinity for SORCS2 than mature NGF. The NGF precursor (proNGF) has much higher affinity for SORT1 than mature NGF. Interacts with ADAM10 in a divalent cation-dependent manner. Interacts with SORCS3.

Its subcellular location is the secreted. It localises to the endosome lumen. Functionally, nerve growth factor is important for the development and maintenance of the sympathetic and sensory nervous systems. Extracellular ligand for the NTRK1 and NGFR receptors, activates cellular signaling cascades through those receptor tyrosine kinase to regulate neuronal proliferation, differentiation and survival. Inhibits metalloproteinase dependent proteolysis of platelet glycoprotein VI. The sequence is that of Beta-nerve growth factor (NGF) from Mastomys natalensis (African soft-furred rat).